A 123-amino-acid polypeptide reads, in one-letter code: Galanin peptides (123 aa).

Positions 1–19 (MARGSALLLASLLLAAALS) are cleaved as a signal peptide. A propeptide spanning residues 20 to 30 (ASAGLWSPAKE) is cleaved from the precursor. Residues 46-80 (HAVGNHRSFSDKNGLTSKRELRPEDDMKPGSFDRS) are disordered. Basic and acidic residues predominate over residues 62–73 (SKRELRPEDDMK). Phosphoserine occurs at positions 116 and 117.

Belongs to the galanin family.

It localises to the secreted. In terms of biological role, endocrine hormone of the central and peripheral nervous systems that binds and activates the G protein-coupled receptors GALR1, GALR2, and GALR3. This small neuropeptide may regulate diverse physiologic functions including contraction of smooth muscle of the gastrointestinal and genitourinary tract, growth hormone and insulin release and adrenal secretion. In Homo sapiens (Human), this protein is Galanin peptides (GAL).